The chain runs to 223 residues: MNHEGLRVMGIDPGLTRCGLSVVQAGRGRTVYPVSVGVVRTPSDAELADRLLRLSQAVGEWMDDYTPDVIAIERVFERGNVSTVMNTAHAVGVLILAAAERGLPVHMYTPSEVKKAISGNGRADKKQMTVMITRILGLAEAPKPADAADALALAVCHCWRAPLLMRTRMTAVDLEHRRRQYQGKLGKAKSTLNARNNAQVTGDAQVRAGHPSQFERPDRADPR.

Catalysis depends on residues Asp-12, Glu-73, and Asp-146. Positions 12, 73, and 146 each coordinate Mg(2+). Residues 182–223 (QGKLGKAKSTLNARNNAQVTGDAQVRAGHPSQFERPDRADPR) are disordered. Residues 190–202 (STLNARNNAQVTG) are compositionally biased toward polar residues. The segment covering 213-223 (QFERPDRADPR) has biased composition (basic and acidic residues).

Belongs to the RuvC family. As to quaternary structure, homodimer which binds Holliday junction (HJ) DNA. The HJ becomes 2-fold symmetrical on binding to RuvC with unstacked arms; it has a different conformation from HJ DNA in complex with RuvA. In the full resolvosome a probable DNA-RuvA(4)-RuvB(12)-RuvC(2) complex forms which resolves the HJ. The cofactor is Mg(2+).

The protein localises to the cytoplasm. The enzyme catalyses Endonucleolytic cleavage at a junction such as a reciprocal single-stranded crossover between two homologous DNA duplexes (Holliday junction).. The RuvA-RuvB-RuvC complex processes Holliday junction (HJ) DNA during genetic recombination and DNA repair. Endonuclease that resolves HJ intermediates. Cleaves cruciform DNA by making single-stranded nicks across the HJ at symmetrical positions within the homologous arms, yielding a 5'-phosphate and a 3'-hydroxyl group; requires a central core of homology in the junction. The consensus cleavage sequence is 5'-(A/T)TT(C/G)-3'. Cleavage occurs on the 3'-side of the TT dinucleotide at the point of strand exchange. HJ branch migration catalyzed by RuvA-RuvB allows RuvC to scan DNA until it finds its consensus sequence, where it cleaves and resolves the cruciform DNA. The protein is Crossover junction endodeoxyribonuclease RuvC of Corynebacterium efficiens (strain DSM 44549 / YS-314 / AJ 12310 / JCM 11189 / NBRC 100395).